The sequence spans 101 residues: Small ribosomal subunit protein bS18c (101 aa).

Residues 1–19 (MNKSKRPFTKSKRSFRRRL) show a composition bias toward basic residues. The interval 1 to 23 (MNKSKRPFTKSKRSFRRRLPPIQ) is disordered.

Belongs to the bacterial ribosomal protein bS18 family. Part of the 30S ribosomal subunit.

The protein resides in the plastid. Its subcellular location is the chloroplast. This chain is Small ribosomal subunit protein bS18c, found in Draba nemorosa (Woodland whitlowgrass).